Here is a 135-residue protein sequence, read N- to C-terminus: Large ribosomal subunit protein uL16c (135 aa).

This sequence belongs to the universal ribosomal protein uL16 family. As to quaternary structure, part of the 50S ribosomal subunit.

It is found in the plastid. The protein resides in the chloroplast. The sequence is that of Large ribosomal subunit protein uL16c from Lepidium virginicum (Virginia pepperweed).